Reading from the N-terminus, the 354-residue chain is Phosphate acyltransferase (354 aa).

Belongs to the PlsX family. Homodimer. Probably interacts with PlsY.

The protein resides in the cytoplasm. The enzyme catalyses a fatty acyl-[ACP] + phosphate = an acyl phosphate + holo-[ACP]. The protein operates within lipid metabolism; phospholipid metabolism. In terms of biological role, catalyzes the reversible formation of acyl-phosphate (acyl-PO(4)) from acyl-[acyl-carrier-protein] (acyl-ACP). This enzyme utilizes acyl-ACP as fatty acyl donor, but not acyl-CoA. In Ralstonia nicotianae (strain ATCC BAA-1114 / GMI1000) (Ralstonia solanacearum), this protein is Phosphate acyltransferase.